A 675-amino-acid chain; its full sequence is Probable metal-nicotianamine transporter YSL16 (675 aa).

Residues 1–11 show a composition bias toward gly residues; the sequence is MDRHALGGGGA. The disordered stretch occupies residues 1 to 20; sequence MDRHALGGGGALEIEKTPEA. Transmembrane regions (helical) follow at residues 50–70, 73–93, 118–138, 162–182, 231–251, 283–303, 329–349, 393–413, 421–441, 453–473, 507–527, 567–587, 605–625, and 633–653; these read GMVAALLIGVVYTVIVMKLSL, GLIPTLNVSAALLAFLALRGW, CAVACYTIGYGGGFGSFLLGL, GIGWMTGFLLSTSFVGLLTLL, ISFLWSFFQWFYTGGDVCGFL, LVNLSLLFGAILSWGIMWPLI, FICIALLVGDGFYNFVKVIVV, MAYTGYTLLSVIAVVLIPVMF, VIIAYLLAPALGFCNAYGTGL, IALFIFAAWAGKDDGVVAGLV, VGQVVGTLMGCVVAPLTFFLF, LQLCAGFFAFAVLANLARDFL, FLVGASFAIDMCAGSLVVFLW, and AALLVPAVASGLICGDGIWTF.

It belongs to the YSL (TC 2.A.67.2) family. In terms of tissue distribution, expressed in roots.

It localises to the membrane. May be involved in the transport of nicotianamine-chelated metals. This chain is Probable metal-nicotianamine transporter YSL16 (YSL16), found in Oryza sativa subsp. japonica (Rice).